The following is a 324-amino-acid chain: Tyrosine--tRNA ligase (324 aa).

Tyr-36 is a binding site for L-tyrosine. Positions Pro-41–His-49 match the 'HIGH' region motif. L-tyrosine-binding residues include Tyr-158, Gln-162, Asp-165, and Gln-180. Positions Lys-215–Ser-219 match the 'KMSKS' region motif. Ser-218 contacts ATP.

Belongs to the class-I aminoacyl-tRNA synthetase family. TyrS type 3 subfamily. As to quaternary structure, homodimer.

It is found in the cytoplasm. It carries out the reaction tRNA(Tyr) + L-tyrosine + ATP = L-tyrosyl-tRNA(Tyr) + AMP + diphosphate + H(+). Catalyzes the attachment of tyrosine to tRNA(Tyr) in a two-step reaction: tyrosine is first activated by ATP to form Tyr-AMP and then transferred to the acceptor end of tRNA(Tyr). This chain is Tyrosine--tRNA ligase, found in Methanopyrus kandleri (strain AV19 / DSM 6324 / JCM 9639 / NBRC 100938).